Consider the following 279-residue polypeptide: Putative pyruvate, phosphate dikinase regulatory protein (279 aa).

Glycine 153–threonine 160 serves as a coordination point for ADP.

The protein belongs to the pyruvate, phosphate/water dikinase regulatory protein family. PDRP subfamily.

It carries out the reaction N(tele)-phospho-L-histidyl/L-threonyl-[pyruvate, phosphate dikinase] + ADP = N(tele)-phospho-L-histidyl/O-phospho-L-threonyl-[pyruvate, phosphate dikinase] + AMP + H(+). It catalyses the reaction N(tele)-phospho-L-histidyl/O-phospho-L-threonyl-[pyruvate, phosphate dikinase] + phosphate + H(+) = N(tele)-phospho-L-histidyl/L-threonyl-[pyruvate, phosphate dikinase] + diphosphate. Its function is as follows. Bifunctional serine/threonine kinase and phosphorylase involved in the regulation of the pyruvate, phosphate dikinase (PPDK) by catalyzing its phosphorylation/dephosphorylation. The polypeptide is Putative pyruvate, phosphate dikinase regulatory protein (Rhodopseudomonas palustris (strain ATCC BAA-98 / CGA009)).